The primary structure comprises 60 residues: Cytotoxin 1 (60 aa).

4 cysteine pairs are disulfide-bonded: C3–C21, C14–C38, C42–C53, and C54–C59.

The protein belongs to the three-finger toxin family. Short-chain subfamily. Type IA cytotoxin sub-subfamily. Monomer in solution; Homodimer and oligomer in the presence of negatively charged lipids forming a pore with a size ranging between 20 and 30 Angstroms. Expressed by the venom gland.

The protein resides in the secreted. It is found in the target cell membrane. Its function is as follows. Shows cytolytic activity on many different cells by forming pore in lipid membranes. In vivo, increases heart rate or kills the animal by cardiac arrest. In addition, it binds to heparin with high affinity, interacts with Kv channel-interacting protein 1 (KCNIP1) in a calcium-independent manner, and binds to integrin alpha-V/beta-3 (ITGAV/ITGB3) with moderate affinity. The polypeptide is Cytotoxin 1 (Naja nivea (Cape cobra)).